A 321-amino-acid chain; its full sequence is Ribosomal RNA small subunit methyltransferase H (321 aa).

S-adenosyl-L-methionine is bound by residues 40-42 (GGH), Asp-60, Phe-84, Asp-106, and Gln-113.

Belongs to the methyltransferase superfamily. RsmH family.

The protein localises to the cytoplasm. It catalyses the reaction cytidine(1402) in 16S rRNA + S-adenosyl-L-methionine = N(4)-methylcytidine(1402) in 16S rRNA + S-adenosyl-L-homocysteine + H(+). Its function is as follows. Specifically methylates the N4 position of cytidine in position 1402 (C1402) of 16S rRNA. The polypeptide is Ribosomal RNA small subunit methyltransferase H (Haemophilus influenzae (strain PittEE)).